The chain runs to 88 residues: EMBRYO SURROUNDING FACTOR 1-like protein 7 (88 aa).

Residues 1–22 (MKSSHIALICIVMFSLFALHES) form the signal peptide. 4 disulfides stabilise this stretch: Cys41–Cys57, Cys46–Cys85, Cys55–Cys81, and Cys58–Cys68.

Belongs to the MEG family. As to expression, expressed in leaves and flowers.

The protein is EMBRYO SURROUNDING FACTOR 1-like protein 7 (ESFL7) of Arabidopsis thaliana (Mouse-ear cress).